Reading from the N-terminus, the 91-residue chain is MVSFNATAILLLLLANAFSKPLYVPEHCGGMSGTLFQACIRQTMVDTTGMYTNSAMSHDGVTIPFDRDGIVHEDHYTETNPTPLFDAGFSV.

Residues 1-19 form the signal peptide; that stretch reads MVSFNATAILLLLLANAFS.

The sequence is that of Non-structural protein 3a from Tylonycteris pachypus (Lesser bamboo bat).